Here is a 210-residue protein sequence, read N- to C-terminus: Pre-mRNA-splicing factor 38 (210 aa).

Residues 181–210 (PLSSSSDEEDDDEEQISKLESNEGAVDRNI) form a disordered region. The span at 195-210 (QISKLESNEGAVDRNI) shows a compositional bias: basic and acidic residues.

The protein belongs to the PRP38 family. Component of the 25S U4/U6.U5 tri-snRNP particle, a subcomplex of the spliceosome.

It localises to the nucleus. Its function is as follows. Required for pre-mRNA splicing and maintenance of stable U6 small nuclear RNA levels. Implicated in the formation of stable and biologically active snRNP structures. As part of the U4/U6.U5 tri-snRNP particle, dispensible for spliceosome assembly, but required for conformational changes, which result in U4 snRNA release and the subsequent catalytic activation of the spliceosome. The chain is Pre-mRNA-splicing factor 38 from Schizosaccharomyces pombe (strain 972 / ATCC 24843) (Fission yeast).